Here is a 207-residue protein sequence, read N- to C-terminus: NADH-quinone oxidoreductase subunit C (207 aa).

The protein belongs to the complex I 30 kDa subunit family. NDH-1 is composed of 14 different subunits. Subunits NuoB, C, D, E, F, and G constitute the peripheral sector of the complex.

The protein localises to the cell inner membrane. The enzyme catalyses a quinone + NADH + 5 H(+)(in) = a quinol + NAD(+) + 4 H(+)(out). In terms of biological role, NDH-1 shuttles electrons from NADH, via FMN and iron-sulfur (Fe-S) centers, to quinones in the respiratory chain. The immediate electron acceptor for the enzyme in this species is believed to be ubiquinone. Couples the redox reaction to proton translocation (for every two electrons transferred, four hydrogen ions are translocated across the cytoplasmic membrane), and thus conserves the redox energy in a proton gradient. The polypeptide is NADH-quinone oxidoreductase subunit C (Thermus thermophilus (strain ATCC BAA-163 / DSM 7039 / HB27)).